A 441-amino-acid chain; its full sequence is Glutamate--tRNA ligase 1 (441 aa).

The short motif at 9–19 is the 'HIGH' region element; that stretch reads PSPTGFIHVGN. The 'KMSKS' region motif lies at 239 to 243; sequence ALSKR. Position 242 (Lys-242) interacts with ATP.

The protein belongs to the class-I aminoacyl-tRNA synthetase family. Glutamate--tRNA ligase type 1 subfamily. As to quaternary structure, monomer.

It is found in the cytoplasm. The catalysed reaction is tRNA(Glu) + L-glutamate + ATP = L-glutamyl-tRNA(Glu) + AMP + diphosphate. Catalyzes the attachment of glutamate to tRNA(Glu) in a two-step reaction: glutamate is first activated by ATP to form Glu-AMP and then transferred to the acceptor end of tRNA(Glu). This Cereibacter sphaeroides (strain ATCC 17025 / ATH 2.4.3) (Rhodobacter sphaeroides) protein is Glutamate--tRNA ligase 1.